The following is a 158-amino-acid chain: ATP synthase subunit b' (158 aa).

A helical transmembrane segment spans residues 24–44 (ATLPLMAVQILVLVFLLNAVF).

Belongs to the ATPase B chain family. In terms of assembly, F-type ATPases have 2 components, F(1) - the catalytic core - and F(0) - the membrane proton channel. F(1) has five subunits: alpha(3), beta(3), gamma(1), delta(1), epsilon(1). F(0) has four main subunits: a(1), b(1), b'(1) and c(10-14). The alpha and beta chains form an alternating ring which encloses part of the gamma chain. F(1) is attached to F(0) by a central stalk formed by the gamma and epsilon chains, while a peripheral stalk is formed by the delta, b and b' chains.

The protein localises to the cellular thylakoid membrane. Functionally, f(1)F(0) ATP synthase produces ATP from ADP in the presence of a proton or sodium gradient. F-type ATPases consist of two structural domains, F(1) containing the extramembraneous catalytic core and F(0) containing the membrane proton channel, linked together by a central stalk and a peripheral stalk. During catalysis, ATP synthesis in the catalytic domain of F(1) is coupled via a rotary mechanism of the central stalk subunits to proton translocation. Component of the F(0) channel, it forms part of the peripheral stalk, linking F(1) to F(0). The b'-subunit is a diverged and duplicated form of b found in plants and photosynthetic bacteria. The sequence is that of ATP synthase subunit b' from Synechococcus elongatus (strain ATCC 33912 / PCC 7942 / FACHB-805) (Anacystis nidulans R2).